A 73-amino-acid chain; its full sequence is Cx9C motif-containing protein 4, mitochondrial (73 aa).

Residues 2–44 enclose the CHCH domain; sequence SNPCQKEACAIQDCLLSHQYDDAKCAKVIDQLYICCSKFYNDN. 2 consecutive short sequence motifs (cx9C motif) follow at residues 5 to 15 and 26 to 36; these read CQKEACAIQDC and CAKVIDQLYIC. 2 cysteine pairs are disulfide-bonded: Cys-5–Cys-36 and Cys-15–Cys-26.

This sequence belongs to the CMC4 family.

It localises to the mitochondrion intermembrane space. The protein is Cx9C motif-containing protein 4, mitochondrial (CMC4) of Saccharomyces cerevisiae (strain ATCC 204508 / S288c) (Baker's yeast).